We begin with the raw amino-acid sequence, 384 residues long: Protein V (384 aa).

2 disordered regions span residues 1–23 and 38–317; these read MDQDAFILKEDSEVEREAPGGRE and SEPT…TKKG. The span at 7–20 shows a compositional bias: basic and acidic residues; it reads ILKEDSEVEREAPG. Over residues 50 to 59 the composition is skewed to polar residues; the sequence is LHNTINTPQG. Phosphoserine; by host is present on S68. Over residues 83-101 the composition is skewed to basic and acidic residues; the sequence is RSGEESRVSGRTSKPEAEA. S125 bears the Phosphoserine; by host mark. Residues 150 to 168 are compositionally biased toward basic and acidic residues; the sequence is GIEDENREMAAHPDKRGED. Residues 191–206 show a composition bias toward polar residues; sequence ASNNGRSMEPGSSHSA. 4 positions are modified to phosphoserine; by host: S192, S249, S257, and S260. Zn(2+)-binding residues include H318, C337, C341, C353, C355, C358, C362, and C365.

Belongs to the paramyxoviruses V protein family. Interacts with host IFIH1/MDA5 and DHX58/LGP2. Interacts with host IRF3. Interacts with host RIGI regulatory protein (via CARDs domain) and host TRIM25 (via SPRY domain); these interactions prevent TRIM25-mediated ubiquitination of RIG-I and disrupts downstream RIG-I signaling.

It localises to the host cytoplasm. In terms of biological role, plays an essential role in the inhibition of host immune response. Prevents the establishment of cellular antiviral state by blocking interferon-alpha/beta (IFN-alpha/beta) production and signaling pathway. Interacts with host IFIH1/MDA5 and DHX58/LGP2 to inhibit the transduction pathway involved in the activation of IFN-beta promoter, thus protecting the virus against cell antiviral state. Also interacts with and inhibits host IRF3. Blocks the type I interferon signaling pathway by disrupting the RIG-I signaling pathway. This is Protein V (P/V/C) from Sendai virus (strain Z) (SeV).